Consider the following 269-residue polypeptide: MNRIHAVILDWAGTTVDFGSFAPTQIFVEAFRQAFDVEITLAEARVPMGLGKWQHIEALGKLPAVDARWQAKFGRSMSAADIDAIYAAFMPLQIAKVVDFSSPIAGVIDTIAALRAEGIKIGSCSGYPRAVMERLVPAAAGHGYRPDHWVATDDLAAGGRPGPWMALQNVIALGIDAVAHCVKVDDAAPGISEGLNAGMWTVGLAVSGNEFGATWDAYQTMSKEDVAVRREHAASKLYAAGAHYVVDSLADLPGVIAHINARLAQGERP.

Asp-10 serves as the catalytic Nucleophile. Mg(2+) contacts are provided by Asp-10 and Ala-12. The active-site Schiff-base intermediate with substrate is Lys-52. Residue Asp-186 participates in Mg(2+) binding.

The protein belongs to the HAD-like hydrolase superfamily. PhnX family. As to quaternary structure, homodimer. Requires Mg(2+) as cofactor.

The enzyme catalyses phosphonoacetaldehyde + H2O = acetaldehyde + phosphate + H(+). Its function is as follows. Involved in phosphonate degradation. The polypeptide is Phosphonoacetaldehyde hydrolase (phnX) (Salmonella typhimurium (strain LT2 / SGSC1412 / ATCC 700720)).